The chain runs to 208 residues: 3-demethoxyubiquinol 3-hydroxylase (208 aa).

The Fe cation site is built by glutamate 57, glutamate 87, histidine 90, glutamate 139, glutamate 171, and histidine 174.

Belongs to the COQ7 family. Requires Fe cation as cofactor.

It localises to the cell membrane. It catalyses the reaction a 5-methoxy-2-methyl-3-(all-trans-polyprenyl)benzene-1,4-diol + AH2 + O2 = a 3-demethylubiquinol + A + H2O. Its pathway is cofactor biosynthesis; ubiquinone biosynthesis. Catalyzes the hydroxylation of 2-nonaprenyl-3-methyl-6-methoxy-1,4-benzoquinol during ubiquinone biosynthesis. This is 3-demethoxyubiquinol 3-hydroxylase from Burkholderia pseudomallei (strain 1106a).